The following is a 399-amino-acid chain: Tryptophan synthase beta chain (399 aa).

Lys90 carries the N6-(pyridoxal phosphate)lysine modification.

It belongs to the TrpB family. As to quaternary structure, tetramer of two alpha and two beta chains. It depends on pyridoxal 5'-phosphate as a cofactor.

It carries out the reaction (1S,2R)-1-C-(indol-3-yl)glycerol 3-phosphate + L-serine = D-glyceraldehyde 3-phosphate + L-tryptophan + H2O. It functions in the pathway amino-acid biosynthesis; L-tryptophan biosynthesis; L-tryptophan from chorismate: step 5/5. In terms of biological role, the beta subunit is responsible for the synthesis of L-tryptophan from indole and L-serine. This chain is Tryptophan synthase beta chain, found in Lactiplantibacillus plantarum (strain ATCC BAA-793 / NCIMB 8826 / WCFS1) (Lactobacillus plantarum).